Reading from the N-terminus, the 881-residue chain is Phosphoinositide 3-kinase regulatory subunit 5 (881 aa).

The heterodimerization stretch occupies residues 23–99; sequence SRDAVSSRWA…APHIPPDSEL (77 aa). 2 disordered regions span residues 312–339 and 472–499; these read PVASENEEDEEEEEEDVETDGCSPERDS and PQAKPRIPARSRRAHSLPQHGLGQKLQT. Acidic residues predominate over residues 316 to 330; it reads ENEEDEEEEEEDVET. The segment at 657–757 is interaction with G beta gamma proteins; the sequence is PILADMILYY…WNDVEKVCTS (101 aa).

As to quaternary structure, heterodimer. Interacts with a catalytic subunit and with G beta gamma proteins.

It is found in the nucleus. Its subcellular location is the cytoplasm. It localises to the cell membrane. Its activity is regulated as follows. Greatly activated by G gamma proteins. In terms of biological role, regulatory subunit of the PI3K gamma complex. This chain is Phosphoinositide 3-kinase regulatory subunit 5 (PIK3R5), found in Gallus gallus (Chicken).